A 248-amino-acid polypeptide reads, in one-letter code: UDP-N-acetyl-D-mannosaminuronic acid transferase (248 aa).

Belongs to the glycosyltransferase 26 family.

The enzyme catalyses UDP-N-acetyl-alpha-D-mannosaminouronate + N-acetyl-alpha-D-glucosaminyl-di-trans,octa-cis-undecaprenyl diphosphate = beta-D-ManNAcA-(1-&gt;4)-alpha-D-GlcNAc-di-trans,octa-cis-undecaprenyl diphosphate + UDP + H(+). It participates in bacterial outer membrane biogenesis; enterobacterial common antigen biosynthesis. Functionally, catalyzes the synthesis of Und-PP-GlcNAc-ManNAcA (Lipid II), the second lipid-linked intermediate involved in enterobacterial common antigen (ECA) synthesis. This chain is UDP-N-acetyl-D-mannosaminuronic acid transferase, found in Klebsiella pneumoniae subsp. pneumoniae (strain ATCC 700721 / MGH 78578).